Here is a 257-residue protein sequence, read N- to C-terminus: MDRIIEKLESGWWIVSHEQKLWLPYGELPHGLAANFDLVGQRALRIGEWQGEPVWLVLQHRRHDMGSVRQVIDQDAGLFQLAGRGVQLAEFYRSHKFCGYCGHPMHPSKTEWAMLCSHCRERYYPQIAPCIIVAIRREDSILLAQHVRHRNGVHTVLAGFVEVGETLEQAVAREVMEESGIKVKNLRYVTSQPWPFPQSLMTAFMAEYDSGDIVIDPKELLEANWYRYDDLPLLPPPGTVARRLIEDTVAMCRAEYD.

R69 contributes to the substrate binding site. 2 residues coordinate Zn(2+): C98 and C101. E111 lines the substrate pocket. Positions 116 and 119 each coordinate Zn(2+). A substrate-binding site is contributed by Y124. Positions 125–248 (PQIAPCIIVA…TVARRLIEDT (124 aa)) constitute a Nudix hydrolase domain. Positions 158, 174, and 178 each coordinate a divalent metal cation. The Nudix box signature appears at 159–180 (GFVEVGETLEQAVAREVMEESG). Residue 192–199 (QPWPFPQS) coordinates substrate. Residue E219 coordinates a divalent metal cation. Substrate is bound at residue A241.

The protein belongs to the Nudix hydrolase family. NudC subfamily. Homodimer. Requires Mg(2+) as cofactor. Mn(2+) serves as cofactor. The cofactor is Zn(2+).

The enzyme catalyses a 5'-end NAD(+)-phospho-ribonucleoside in mRNA + H2O = a 5'-end phospho-adenosine-phospho-ribonucleoside in mRNA + beta-nicotinamide D-ribonucleotide + 2 H(+). The catalysed reaction is NAD(+) + H2O = beta-nicotinamide D-ribonucleotide + AMP + 2 H(+). It catalyses the reaction NADH + H2O = reduced beta-nicotinamide D-ribonucleotide + AMP + 2 H(+). In terms of biological role, mRNA decapping enzyme that specifically removes the nicotinamide adenine dinucleotide (NAD) cap from a subset of mRNAs by hydrolyzing the diphosphate linkage to produce nicotinamide mononucleotide (NMN) and 5' monophosphate mRNA. The NAD-cap is present at the 5'-end of some mRNAs and stabilizes RNA against 5'-processing. Has preference for mRNAs with a 5'-end purine. Catalyzes the hydrolysis of a broad range of dinucleotide pyrophosphates. The chain is NAD-capped RNA hydrolase NudC from Salmonella schwarzengrund (strain CVM19633).